Here is an 82-residue protein sequence, read N- to C-terminus: Small ribosomal subunit protein bS16 (82 aa).

The protein belongs to the bacterial ribosomal protein bS16 family.

The polypeptide is Small ribosomal subunit protein bS16 (Actinobacillus pleuropneumoniae serotype 5b (strain L20)).